A 312-amino-acid chain; its full sequence is Olfactory receptor 10C1 (312 aa).

At 1 to 24 (MSANTSMVTEFLLLGFSHLADLQG) the chain is on the extracellular side. N-linked (GlcNAc...) asparagine glycosylation is present at Asn-4. A helical transmembrane segment spans residues 25 to 45 (LLFSVFLTIYLLTVAGNFLIV). Over 46 to 53 (VLVSTDAA) the chain is Cytoplasmic. A helical transmembrane segment spans residues 54-74 (LQSPMYFFLRTLSALEIGYTS). Over 75-98 (VTVPLLLHHLLTGRRHISRSGCAL) the chain is Extracellular. The cysteines at positions 96 and 188 are disulfide-linked. A helical transmembrane segment spans residues 99 to 119 (QMFFFLFFGATECCLLAAMAY). Residues 120–138 (DRYAAICEPLRYPLLLSHR) are Cytoplasmic-facing. A helical membrane pass occupies residues 139–159 (VCLQLAGSAWACGVLVGLGHT). Residues 160–196 (PFIFSLPFCGPNTIPQFFCEIQPVLQLVCGDTSLNEL) are Extracellular-facing. Residues 197 to 216 (QIILATALLILCPFGLILGS) traverse the membrane as a helical segment. Over 217–236 (YGRILVTIFRIPSVAGRRKA) the chain is Cytoplasmic. The helical transmembrane segment at 237–257 (FSTCSSHLIMVSLFYGTALFI) threads the bilayer. Topologically, residues 258–270 (YIRPKASYDPATD) are extracellular. A helical membrane pass occupies residues 271–291 (PLVSLFYAVVTPILNPIIYSL). The Cytoplasmic portion of the chain corresponds to 292–312 (RNTEVKAALKRTIQKTVPMEI).

It belongs to the G-protein coupled receptor 1 family.

The protein resides in the cell membrane. Odorant receptor. The polypeptide is Olfactory receptor 10C1 (OR10C1) (Homo sapiens (Human)).